The primary structure comprises 330 residues: B3 domain-containing protein REM21 (330 aa).

Residues 23–116 (PRFFTVFLSH…SYEVSIYGRG (94 aa)) constitute a DNA-binding region (TF-B3). Positions 129-138 (EISDDTEDDN) are enriched in acidic residues. The interval 129 to 169 (EISDDTEDDNVSLHSPSNVSLDSLSNDSHHSTSNVSLRSLS) is disordered. The segment covering 142 to 162 (HSPSNVSLDSLSNDSHHSTSN) has biased composition (low complexity).

The protein localises to the nucleus. The sequence is that of B3 domain-containing protein REM21 (REM21) from Arabidopsis thaliana (Mouse-ear cress).